Here is a 295-residue protein sequence, read N- to C-terminus: Mycothiol acetyltransferase (295 aa).

2 N-acetyltransferase domains span residues 4–138 (TEWR…RPLT) and 149–295 (VRIA…YAAN). D36 is a 1D-myo-inositol 2-(L-cysteinylamino)-2-deoxy-alpha-D-glucopyranoside binding site. Acetyl-CoA contacts are provided by residues 77 to 79 (LVV) and 85 to 90 (RRGIGA). Residues E176, K217, and E225 each coordinate 1D-myo-inositol 2-(L-cysteinylamino)-2-deoxy-alpha-D-glucopyranoside. Acetyl-CoA is bound by residues 229–231 (VGV) and 236–242 (QGRGLGY). Position 266 (Y266) interacts with 1D-myo-inositol 2-(L-cysteinylamino)-2-deoxy-alpha-D-glucopyranoside. Residue 271-276 (NSAAVN) coordinates acetyl-CoA.

The protein belongs to the acetyltransferase family. MshD subfamily. As to quaternary structure, monomer.

It catalyses the reaction 1D-myo-inositol 2-(L-cysteinylamino)-2-deoxy-alpha-D-glucopyranoside + acetyl-CoA = mycothiol + CoA + H(+). Its function is as follows. Catalyzes the transfer of acetyl from acetyl-CoA to desacetylmycothiol (Cys-GlcN-Ins) to form mycothiol. The protein is Mycothiol acetyltransferase (mshD) of Mycolicibacterium smegmatis (strain ATCC 700084 / mc(2)155) (Mycobacterium smegmatis).